The sequence spans 478 residues: ATP synthase subunit beta (478 aa).

164-171 contacts ATP; the sequence is GGAGVGKT.

This sequence belongs to the ATPase alpha/beta chains family. As to quaternary structure, F-type ATPases have 2 components, CF(1) - the catalytic core - and CF(0) - the membrane proton channel. CF(1) has five subunits: alpha(3), beta(3), gamma(1), delta(1), epsilon(1). CF(0) has three main subunits: a(1), b(2) and c(9-12). The alpha and beta chains form an alternating ring which encloses part of the gamma chain. CF(1) is attached to CF(0) by a central stalk formed by the gamma and epsilon chains, while a peripheral stalk is formed by the delta and b chains.

It localises to the cell membrane. The enzyme catalyses ATP + H2O + 4 H(+)(in) = ADP + phosphate + 5 H(+)(out). In terms of biological role, produces ATP from ADP in the presence of a proton gradient across the membrane. The catalytic sites are hosted primarily by the beta subunits. This is ATP synthase subunit beta from Corynebacterium kroppenstedtii (strain DSM 44385 / JCM 11950 / CIP 105744 / CCUG 35717).